A 363-amino-acid chain; its full sequence is Ribonuclease D (363 aa).

Positions I5–L168 constitute a 3'-5' exonuclease domain. An HRDC domain is found at E208–A288.

This sequence belongs to the RNase D family. A divalent metal cation serves as cofactor.

The protein resides in the cytoplasm. It carries out the reaction Exonucleolytic cleavage that removes extra residues from the 3'-terminus of tRNA to produce 5'-mononucleotides.. Exonuclease involved in the 3' processing of various precursor tRNAs. Initiates hydrolysis at the 3'-terminus of an RNA molecule and releases 5'-mononucleotides. The protein is Ribonuclease D of Xanthomonas oryzae pv. oryzae (strain KACC10331 / KXO85).